Reading from the N-terminus, the 629-residue chain is Coiled-coil domain-containing protein 93 (629 aa).

The disordered stretch occupies residues 1–23 (MGLPKGPEGQGLPEVETREDEEQ). Residues 1 to 428 (MGLPKGPEGQ…ETLKAERAPG (428 aa)) are sufficient for interaction with CCDC22. Coiled coils occupy residues 231–430 (LSAA…PGEK) and 558–599 (LRQM…LLEK). A phosphoserine mark is found at S298, S301, and S305. Positions 446–629 (THNEDLDRRY…LLSKIKAKAS (184 aa)) are sufficient for interaction with WASHC2C.

It belongs to the CCDC93 family. As to quaternary structure, component of the commander complex consisting of the CCC subcomplex and the retriever subcomplex. Component of the CCC (COMMD/CCDC22/CCDC93) subcomplex consisting of COMMD1, COMMD2, COMMD3, COMMD4, COMMD5, COMMD6, COMMD7, COMMD8, COMMD9, COMMD10, CCDC22 and CCDC93. Forms a coiled-coil heterodimer with CCDC22; this heterodimer interacts with the guanine nucleotide exchange factor DENND10; the interaction is direct. Interacts with WASHC1. Interacts directly with WASHC2C. Interacts with SNX17 and SNX31.

The protein localises to the early endosome. Functionally, component of the commander complex that is essential for endosomal recycling of transmembrane cargos; the commander complex is composed of composed of the CCC subcomplex and the retriever subcomplex. Component of the CCC complex, which is involved in the regulation of endosomal recycling of surface proteins, including integrins, signaling receptor and channels. The CCC complex associates with SNX17, retriever and WASH complexes to prevent lysosomal degradation and promote cell surface recycling of numerous cargos such as integrins ITGA5:ITGB1. Involved in copper-dependent ATP7A trafficking between the trans-Golgi network and vesicles in the cell periphery; the function is proposed to depend on its association within the CCC complex and cooperation with the WASH complex on early endosomes and is dependent on its interaction with WASHC2C. The sequence is that of Coiled-coil domain-containing protein 93 (Ccdc93) from Mus musculus (Mouse).